The sequence spans 201 residues: UPF0301 protein RHECIAT_CH0001061 (201 aa).

Belongs to the UPF0301 (AlgH) family.

The sequence is that of UPF0301 protein RHECIAT_CH0001061 from Rhizobium etli (strain CIAT 652).